The chain runs to 145 residues: Deoxyuridine 5'-triphosphate nucleotidohydrolase (145 aa).

Substrate-binding positions include Arg-65–Gly-67, Asn-78, Thr-82–Asp-84, and Met-92.

This sequence belongs to the dUTPase family. Mg(2+) serves as cofactor.

The catalysed reaction is dUTP + H2O = dUMP + diphosphate + H(+). Its pathway is pyrimidine metabolism; dUMP biosynthesis; dUMP from dCTP (dUTP route): step 2/2. Its function is as follows. This enzyme is involved in nucleotide metabolism: it produces dUMP, the immediate precursor of thymidine nucleotides and it decreases the intracellular concentration of dUTP so that uracil cannot be incorporated into DNA. This is Deoxyuridine 5'-triphosphate nucleotidohydrolase from Chlorobium phaeobacteroides (strain BS1).